Consider the following 273-residue polypeptide: Probable ribosomal RNA small subunit methyltransferase A (273 aa).

S-adenosyl-L-methionine-binding residues include Asn23, Leu25, Gly50, Glu71, Asp95, and Asn110.

This sequence belongs to the class I-like SAM-binding methyltransferase superfamily. rRNA adenine N(6)-methyltransferase family. RsmA subfamily.

It localises to the cytoplasm. In terms of biological role, specifically dimethylates two adjacent adenosines in the loop of a conserved hairpin near the 3'-end of 16S rRNA in the 30S particle. May play a critical role in biogenesis of 30S subunits. In Thermococcus sibiricus (strain DSM 12597 / MM 739), this protein is Probable ribosomal RNA small subunit methyltransferase A.